The sequence spans 122 residues: Large ribosomal subunit protein uL18 (122 aa).

Belongs to the universal ribosomal protein uL18 family. In terms of assembly, part of the 50S ribosomal subunit; part of the 5S rRNA/L5/L18/L25 subcomplex. Contacts the 5S and 23S rRNAs.

In terms of biological role, this is one of the proteins that bind and probably mediate the attachment of the 5S RNA into the large ribosomal subunit, where it forms part of the central protuberance. This chain is Large ribosomal subunit protein uL18, found in Desulfitobacterium hafniense (strain Y51).